A 461-amino-acid polypeptide reads, in one-letter code: Chromosomal replication initiator protein DnaA (461 aa).

The interval 1–87 is domain I, interacts with DnaA modulators; sequence MAVSLWQQCI…IGSRPSAKPV (87 aa). A domain II region spans residues 87-124; it reads VVQATAAIRPKPAASKAVEKPTFNAPQAEPAITANHRS. Residues 125–341 form a domain III, AAA+ region region; sequence NINPTYQFDN…GALNRVIANA (217 aa). Gly-169, Gly-171, Lys-172, and Thr-173 together coordinate ATP. The segment at 342–461 is domain IV, binds dsDNA; sequence NFTGRPITID…YANLIRTLSS (120 aa).

This sequence belongs to the DnaA family. In terms of assembly, oligomerizes as a right-handed, spiral filament on DNA at oriC.

The protein resides in the cytoplasm. Plays an essential role in the initiation and regulation of chromosomal replication. ATP-DnaA binds to the origin of replication (oriC) to initiate formation of the DNA replication initiation complex once per cell cycle. Binds the DnaA box (a 9 base pair repeat at the origin) and separates the double-stranded (ds)DNA. Forms a right-handed helical filament on oriC DNA; dsDNA binds to the exterior of the filament while single-stranded (ss)DNA is stabiized in the filament's interior. The ATP-DnaA-oriC complex binds and stabilizes one strand of the AT-rich DNA unwinding element (DUE), permitting loading of DNA polymerase. After initiation quickly degrades to an ADP-DnaA complex that is not apt for DNA replication. Binds acidic phospholipids. This is Chromosomal replication initiator protein DnaA from Shewanella piezotolerans (strain WP3 / JCM 13877).